We begin with the raw amino-acid sequence, 191 residues long: Thymidylate kinase (191 aa).

7–14 contributes to the ATP binding site; the sequence is GIDTAGKS.

Belongs to the thymidylate kinase family.

It catalyses the reaction dTMP + ATP = dTDP + ADP. Functionally, phosphorylation of dTMP to form dTDP in both de novo and salvage pathways of dTTP synthesis. This chain is Thymidylate kinase, found in Sulfurimonas denitrificans (strain ATCC 33889 / DSM 1251) (Thiomicrospira denitrificans (strain ATCC 33889 / DSM 1251)).